Reading from the N-terminus, the 85-residue chain is ADAAAGGKVFNANCAACHASGGGQINGAKTLKKNALTANGKDTVEAIVAQVTNGKGAMPAFKGRLSDDQIQSVALYVLDKAEKGW.

Heme c is bound by residues Cys14, Cys17, His18, and Met58.

This sequence belongs to the cytochrome c family. PetJ subfamily. In terms of assembly, monomer. In terms of processing, binds 1 heme c group covalently per subunit.

The protein localises to the cellular thylakoid lumen. Functionally, functions as an electron carrier between membrane-bound cytochrome b6-f and photosystem I in oxygenic photosynthesis. This Leptolyngbya boryana (Plectonema boryanum) protein is Cytochrome c6 (petJ).